Here is a 156-residue protein sequence, read N- to C-terminus: Mitochondrial intermembrane space cysteine motif-containing protein MIX17 (156 aa).

The transit peptide at 1-21 (MARSRGSSRPISRSRPTQTRS) directs the protein to the mitochondrion. Positions 1–21 (MARSRGSSRPISRSRPTQTRS) are enriched in low complexity. Disordered stretches follow at residues 1–50 (MARS…GAQT) and 78–110 (AGIT…QTQT). Residues 84–110 (FSGSGSDSAPVEQQQQNMANTSGQTQT) are compositionally biased toward polar residues. A CHCH domain is found at 115 to 156 (GRTCEIDARNFTRCLDENNGNFQICDYYLQQLKACQEAARQY). Residues 118 to 128 (CEIDARNFTRC) carry the Cx9C motif motif. 2 cysteine pairs are disulfide-bonded: C118–C149 and C128–C139.

The protein resides in the mitochondrion intermembrane space. This is Mitochondrial intermembrane space cysteine motif-containing protein MIX17 (MIX17) from Saccharomyces cerevisiae (strain ATCC 204508 / S288c) (Baker's yeast).